The chain runs to 288 residues: CBY1-interacting BAR domain-containing protein 1 (288 aa).

The N-terminal 47 residues, 1 to 47, are a transit peptide targeting the mitochondrion; the sequence is MLRRSLENRDAQTRQLQDAVTNVEKHFGELCQIFAAYVRKTARLRDK. Residues 10–220 are BAR-like; that stretch reads DAQTRQLQDA…KIDEEEDLEV (211 aa). Residues 107 to 176 are a coiled coil; the sequence is KMKRDDLKAT…ETIDNFEKQK (70 aa). The segment at 266-288 is disordered; that stretch reads RKDHQTEDDDEEDEDLDVTEEEN. The segment covering 271-288 has biased composition (acidic residues); that stretch reads TEDDDEEDEDLDVTEEEN.

It belongs to the CIBAR family. As to quaternary structure, homodimer (via BAR-like domain). Heterodimer with FAM92B (via BAR-like domains). Interacts (via BAR-like domain) with CBY1; this interaction is required for targeting FAM92A to centriole and cilium basal body. Interacts (via BAR-like domain) with CBY3; both proteins form a ninefold symmetric structure at the flagellar base; are recruited to the annulus in a mutually dependent manner and regulate annulus positionning.

The protein localises to the cytoplasm. The protein resides in the cytoskeleton. Its subcellular location is the microtubule organizing center. It localises to the centrosome. It is found in the centriole. The protein localises to the cilium basal body. The protein resides in the cell projection. Its subcellular location is the cilium. It localises to the nucleus. It is found in the mitochondrion inner membrane. The protein localises to the flagellum. Its function is as follows. Plays a critical role in regulating mitochondrial ultrastructure and function by maintaining the integrity of mitochondrial morphology, particularly the organization of cristae. Preferentially binds to negatively charged phospholipids like cardiolipin and phosphatidylinositol 4,5-bisphosphate enhancing its interaction with mitochondrial membranes. Induces membrane curvature and tubulation, which are critical for maintaining mitochondrial ultrastructure and the organization of cristae. Plays a crucial role in ciliogenesis. May play a role in limb development through its role in ciliogenesis. Plays a key role in the correct positioning of the annulus, a septin-based ring structure in the sperm flagellum, serving both as a physical barrier and a membrane diffusion barrier that separates the midpiece (MP) from the principal piece (PP). This positioning is essential for proper sperm motility and function. Interacts with CBY3 to form a complex which localizes to the curved membrane region of the flagellar pocket. By doing so, may provide stability and rigidity to the periannular membrane to prevent membrane deformation. This function is crucial for halting annulus migration at the proximal end of the fibrous sheath-containing PP. The sequence is that of CBY1-interacting BAR domain-containing protein 1 from Bos taurus (Bovine).